The following is a 66-amino-acid chain: Large ribosomal subunit protein bL35 (66 aa).

The protein belongs to the bacterial ribosomal protein bL35 family.

The protein is Large ribosomal subunit protein bL35 of Caulobacter vibrioides (strain ATCC 19089 / CIP 103742 / CB 15) (Caulobacter crescentus).